Consider the following 368-residue polypeptide: Propane 2-monooxygenase, hydroxylase component small subunit (368 aa).

The segment covering 1-17 (MSAPEKPRERSFPKIEF) has biased composition (basic and acidic residues). The tract at residues 1-32 (MSAPEKPRERSFPKIEFTDSEAGAKEFPSSKS) is disordered.

The protein belongs to the TmoE/XamoE family. As to quaternary structure, the propane 2-monooxygenase multicomponent enzyme system is composed of an electron transfer component and a monooxygenase component interacting with the effector protein MimD. The electron transfer component is composed of a reductase (MimB), and the monooxygenase component is formed by a large subunit (MimA) and a small subunit (MimC). Requires the presence of the chaperonin-like protein MimG to ensure a productive folding, resulting of a soluble MimC, which leads to the active form of MimABCD.

It catalyses the reaction propane + NADH + O2 + H(+) = propan-2-ol + NAD(+) + H2O. The catalysed reaction is acetone + NADH + O2 + H(+) = hydroxyacetone + NAD(+) + H2O. It carries out the reaction butan-2-one + NADH + O2 + H(+) = 1-hydroxy-2-butanone + NAD(+) + H2O. The enzyme catalyses phenol + NADH + O2 + H(+) = hydroquinone + NAD(+) + H2O. Component of the propane 2-monooxygenase multicomponent enzyme system which is involved in the degradation of propane via the O2-dependent hydroxylation of propane. Also involved in the degradation of acetone via the O2-dependent hydroxylation of acetone. Also able to catalyze the oxidation of phenol, methylethylketone (2-butanone), 1-propanol and 2-propanol. This Mycolicibacterium smegmatis (strain ATCC 700084 / mc(2)155) (Mycobacterium smegmatis) protein is Propane 2-monooxygenase, hydroxylase component small subunit.